Here is a 714-residue protein sequence, read N- to C-terminus: T-cell activation Rho GTPase-activating protein (714 aa).

A Rho-GAP domain is found at 88–277 (QPLSIICGEN…FLIDNCFEIF (190 aa)). 5 disordered regions span residues 290-357 (DDSL…ESSV), 370-419 (QDRR…AEDP), 451-508 (QGHI…HSMS), 520-563 (RTSS…QSQT), and 623-650 (KPSTAVPPVPSHHGGDLSEGTPGGHRLS). Over residues 299 to 311 (SDVSTLQNDSAYD) the composition is skewed to polar residues. S398 is subject to Phosphoserine. Residues 459–471 (SRSSPGESLGSSP) show a composition bias toward low complexity. Composition is skewed to basic and acidic residues over residues 492-501 (KTDKTKPQRE) and 527-545 (EKSKDFSRDQLQKDLRKES).

Highly expressed in testis.

Its function is as follows. May function as a GTPase-activating protein. May play a role in transmission ratio distortion (TRD) in mouse, in which heterozygous males for t-locus transmit their t-carrying chromosome to 95% or more of their offspring. The protein is T-cell activation Rho GTPase-activating protein (Tagap) of Mus musculus (Mouse).